Reading from the N-terminus, the 1025-residue chain is Error-prone DNA polymerase (1025 aa).

This sequence belongs to the DNA polymerase type-C family. DnaE2 subfamily.

It is found in the cytoplasm. The catalysed reaction is DNA(n) + a 2'-deoxyribonucleoside 5'-triphosphate = DNA(n+1) + diphosphate. Its function is as follows. DNA polymerase involved in damage-induced mutagenesis and translesion synthesis (TLS). It is not the major replicative DNA polymerase. This is Error-prone DNA polymerase from Alkalilimnicola ehrlichii (strain ATCC BAA-1101 / DSM 17681 / MLHE-1).